A 303-amino-acid polypeptide reads, in one-letter code: Bifunctional protein FolD (303 aa).

NADP(+) contacts are provided by residues 175–177 and isoleucine 243; that span reads GVS.

The protein belongs to the tetrahydrofolate dehydrogenase/cyclohydrolase family. In terms of assembly, homodimer.

The catalysed reaction is (6R)-5,10-methylene-5,6,7,8-tetrahydrofolate + NADP(+) = (6R)-5,10-methenyltetrahydrofolate + NADPH. It carries out the reaction (6R)-5,10-methenyltetrahydrofolate + H2O = (6R)-10-formyltetrahydrofolate + H(+). Its pathway is one-carbon metabolism; tetrahydrofolate interconversion. In terms of biological role, catalyzes the oxidation of 5,10-methylenetetrahydrofolate to 5,10-methenyltetrahydrofolate and then the hydrolysis of 5,10-methenyltetrahydrofolate to 10-formyltetrahydrofolate. This chain is Bifunctional protein FolD, found in Xanthomonas axonopodis pv. citri (strain 306).